The chain runs to 308 residues: uncharacterized protein (308 aa).

This is an uncharacterized protein from Treponema pallidum (strain Nichols).